The primary structure comprises 408 residues: Peptidase T (408 aa).

His78 is a Zn(2+) binding site. The active site involves Asp80. A Zn(2+)-binding site is contributed by Asp141. Glu175 serves as the catalytic Proton acceptor. 3 residues coordinate Zn(2+): Glu176, Asp198, and His380.

This sequence belongs to the peptidase M20B family. It depends on Zn(2+) as a cofactor.

It is found in the cytoplasm. It carries out the reaction Release of the N-terminal residue from a tripeptide.. Cleaves the N-terminal amino acid of tripeptides. The polypeptide is Peptidase T (Clostridium botulinum (strain 657 / Type Ba4)).